Here is a 101-residue protein sequence, read N- to C-terminus: Small ribosomal subunit protein uS14 (101 aa).

Positions Met1 to Asn10 are enriched in basic and acidic residues. The disordered stretch occupies residues Met1 to Lys23. Basic residues predominate over residues Asn11–Lys23.

This sequence belongs to the universal ribosomal protein uS14 family. As to quaternary structure, part of the 30S ribosomal subunit. Contacts proteins S3 and S10.

Binds 16S rRNA, required for the assembly of 30S particles and may also be responsible for determining the conformation of the 16S rRNA at the A site. This Nitrobacter winogradskyi (strain ATCC 25391 / DSM 10237 / CIP 104748 / NCIMB 11846 / Nb-255) protein is Small ribosomal subunit protein uS14.